The chain runs to 925 residues: Probable dipeptidyl-aminopeptidase B (925 aa).

The disordered stretch occupies residues 1–104 (MTPYRDVPPV…RHAQKKGPGM (104 aa)). Topologically, residues 1-110 (MTPYRDVPPV…GPGMDRGMRR (110 aa)) are cytoplasmic. Residues 31–40 (ESGSSVSTTS) are compositionally biased toward low complexity. The span at 55-72 (LSEKQPRGDDNEDALKDE) shows a compositional bias: basic and acidic residues. The chain crosses the membrane as a helical; Signal-anchor for type II membrane protein span at residues 111–131 (ALLIAAGLLVSAWVAGLFVYI). Over 132 to 925 (ATKSYKPASA…PKPNGKRRAA (794 aa)) the chain is Vacuolar. The N-linked (GlcNAc...) asparagine glycan is linked to Asn369. The active-site Charge relay system is Ser773. An N-linked (GlcNAc...) asparagine glycan is attached at Asn832. Catalysis depends on charge relay system residues Asp850 and His883.

It belongs to the peptidase S9B family.

The protein localises to the vacuole membrane. The catalysed reaction is Release of an N-terminal dipeptide, Xaa-Yaa-|-Zaa-, from a polypeptide, preferentially when Yaa is Pro, provided Zaa is neither Pro nor hydroxyproline.. In terms of biological role, type IV dipeptidyl-peptidase which removes N-terminal dipeptides sequentially from polypeptides having unsubstituted N-termini provided that the penultimate residue is proline. The polypeptide is Probable dipeptidyl-aminopeptidase B (DAPB) (Chaetomium globosum (strain ATCC 6205 / CBS 148.51 / DSM 1962 / NBRC 6347 / NRRL 1970) (Soil fungus)).